Here is a 535-residue protein sequence, read N- to C-terminus: MASIRSCVSVNPAAAVTPVKYKSARVGAAGLDPKGLRISCSSSSSSLAAGGGDGCRDAGCASSSGRGSGVVGSVGDGWWGRRGGQRERAVAAMCSAGMEGVRHGAAAVASVPAASASALPERAKVVALVAAVMLLCNADRVVMSVAVVPFAAQYGWSSSFLGIVQSSFLWGYVFSSMVGGALADRYGGKKVMAGAAALWSLATFLTPWAASQSTIMLLAIRALFGLAEGVAFPTMSTFLPKWFPTHERATAVGISMGGFHLGNVISFLATPIIMSHIGLAGTFAFFASLGYLWLSVWLFNVESDPLDSRTISKSELQLILAGRSASKIQGSKFPSLREILSKIEMWAIIVANVVNNWGYFVLLSWMPVYFKTVYNVNLKQAAWFSAIPWAVMALSGYVAGASADFLIKSGFSVALVRKIMQSIGFIGPGVSLLCLRFAQTPSVAAVLMTIALSLSSFSQAGYFCNVQDIAPKYAGSLHGLTNGIGTVAAIVSTIGTGYFVQWLGSFQAFLTLTAVLYFSATVFYNTYATGDLIFD.

Residues 1-95 (MASIRSCVSV…RERAVAAMCS (95 aa)) constitute a chloroplast transit peptide. 12 consecutive transmembrane segments (helical) span residues 125-145 (VVAL…VMSV), 160-180 (FLGI…MVGG), 191-211 (VMAG…WAAS), 215-235 (IMLL…FPTM), 254-274 (ISMG…PIIM), 279-299 (LAGT…VWLF), 343-363 (IEMW…FVLL), 381-401 (AAWF…VAGA), 413-433 (VALV…VSLL), 443-463 (VAAV…AGYF), 483-503 (GIGT…VQWL), and 504-524 (GSFQ…TVFY).

It belongs to the major facilitator superfamily. Sodium/anion cotransporter (TC 2.A.1.14) family.

It localises to the plastid. The protein localises to the chloroplast membrane. Functionally, probable anion transporter. The protein is Probable anion transporter 2, chloroplastic (PHT4;2) of Oryza sativa subsp. japonica (Rice).